The sequence spans 143 residues: Large ribosomal subunit protein uL11 (143 aa).

Belongs to the universal ribosomal protein uL11 family. Part of the ribosomal stalk of the 50S ribosomal subunit. Interacts with L10 and the large rRNA to form the base of the stalk. L10 forms an elongated spine to which L12 dimers bind in a sequential fashion forming a multimeric L10(L12)X complex. One or more lysine residues are methylated.

Functionally, forms part of the ribosomal stalk which helps the ribosome interact with GTP-bound translation factors. The chain is Large ribosomal subunit protein uL11 from Stutzerimonas stutzeri (strain A1501) (Pseudomonas stutzeri).